The following is a 349-amino-acid chain: Isopentenyl-diphosphate delta-isomerase (349 aa).

Position 9–10 (9–10 (RK)) interacts with substrate. FMN contacts are provided by residues 65–67 (AMT), serine 95, and asparagine 124. 95–97 (STH) provides a ligand contact to substrate. Glutamine 154 contributes to the substrate binding site. Position 155 (glutamate 155) interacts with Mg(2+). Residues lysine 186, serine 211, threonine 216, 262 to 264 (GLR), and 283 to 284 (SR) contribute to the FMN site.

This sequence belongs to the IPP isomerase type 2 family. As to quaternary structure, homooctamer. Dimer of tetramers. It depends on FMN as a cofactor. NADPH is required as a cofactor. Mg(2+) serves as cofactor.

Its subcellular location is the cytoplasm. It catalyses the reaction isopentenyl diphosphate = dimethylallyl diphosphate. In terms of biological role, involved in the biosynthesis of isoprenoids. Catalyzes the 1,3-allylic rearrangement of the homoallylic substrate isopentenyl (IPP) to its allylic isomer, dimethylallyl diphosphate (DMAPP). The polypeptide is Isopentenyl-diphosphate delta-isomerase (Staphylococcus aureus (strain MSSA476)).